We begin with the raw amino-acid sequence, 866 residues long: Rifampicin phosphotransferase (866 aa).

The ATP-binding stretch occupies residues 1-313 (MSSLVLGLHE…FYIVQSRPIT (313 aa)). The ATP site is built by K22, R116, G131, T135, Q182, E296, Q308, and R310. The segment at 326–754 (NHVYISVGHQ…TSDGEIVTGE (429 aa)) is rifampicin-binding. Residues 410 to 429 (IPNDKTAPNPSRGNADMPAQ) form a disordered region. The swivel phosphohistidine stretch occupies residues 767–865 (GLPVSSGVIE…VHGTEGYIEI (99 aa)). The active-site Tele-phosphohistidine intermediate is the H825.

It belongs to the rifampicin phosphotransferase family.

The enzyme catalyses rifampicin + ATP + H2O = 21-phosphorifampicin + AMP + phosphate + 2 H(+). Catalyzes the phosphorylation of rifampicin, also known as rifampin (RIF), leading to its inactivation. This is Rifampicin phosphotransferase from Bacillus subtilis (strain 168).